The chain runs to 391 residues: Origin recognition complex subunit 2 (391 aa).

Positions 1 to 43 (MEEYTDSGEDKNVYSDDDNDYFTASTQNNRTSKNTDSSPLDPK) are disordered. Residues 22-38 (FTASTQNNRTSKNTDSS) show a composition bias toward polar residues.

This sequence belongs to the ORC2 family. ORC is composed of six subunits.

The protein resides in the nucleus. Its function is as follows. Component of the origin recognition complex (ORC) that binds origins of replication. DNA-binding is ATP-dependent, however specific DNA sequences that define origins of replication have not been identified so far. ORC is required to assemble the pre-replication complex necessary to initiate DNA replication. The sequence is that of Origin recognition complex subunit 2 (orcB) from Dictyostelium discoideum (Social amoeba).